Here is a 196-residue protein sequence, read N- to C-terminus: Imidazole glycerol phosphate synthase subunit HisH (196 aa).

The region spanning 2 to 196 (NIVIIDTNCS…QQLVKNFLEI (195 aa)) is the Glutamine amidotransferase type-1 domain. Cysteine 77 functions as the Nucleophile in the catalytic mechanism. Active-site residues include histidine 178 and glutamate 180.

Heterodimer of HisH and HisF.

The protein localises to the cytoplasm. It carries out the reaction 5-[(5-phospho-1-deoxy-D-ribulos-1-ylimino)methylamino]-1-(5-phospho-beta-D-ribosyl)imidazole-4-carboxamide + L-glutamine = D-erythro-1-(imidazol-4-yl)glycerol 3-phosphate + 5-amino-1-(5-phospho-beta-D-ribosyl)imidazole-4-carboxamide + L-glutamate + H(+). It catalyses the reaction L-glutamine + H2O = L-glutamate + NH4(+). Its pathway is amino-acid biosynthesis; L-histidine biosynthesis; L-histidine from 5-phospho-alpha-D-ribose 1-diphosphate: step 5/9. In terms of biological role, IGPS catalyzes the conversion of PRFAR and glutamine to IGP, AICAR and glutamate. The HisH subunit catalyzes the hydrolysis of glutamine to glutamate and ammonia as part of the synthesis of IGP and AICAR. The resulting ammonia molecule is channeled to the active site of HisF. This is Imidazole glycerol phosphate synthase subunit HisH from Blochmanniella pennsylvanica (strain BPEN).